Consider the following 299-residue polypeptide: Pyridoxal 5'-phosphate synthase subunit PdxS (299 aa).

D24 contacts D-ribose 5-phosphate. K81 functions as the Schiff-base intermediate with D-ribose 5-phosphate in the catalytic mechanism. Residue G153 participates in D-ribose 5-phosphate binding. Residue R165 coordinates D-glyceraldehyde 3-phosphate. D-ribose 5-phosphate-binding positions include G219 and 240-241 (GS).

This sequence belongs to the PdxS/SNZ family. As to quaternary structure, in the presence of PdxT, forms a dodecamer of heterodimers.

It catalyses the reaction aldehydo-D-ribose 5-phosphate + D-glyceraldehyde 3-phosphate + L-glutamine = pyridoxal 5'-phosphate + L-glutamate + phosphate + 3 H2O + H(+). Its pathway is cofactor biosynthesis; pyridoxal 5'-phosphate biosynthesis. Its function is as follows. Catalyzes the formation of pyridoxal 5'-phosphate from ribose 5-phosphate (RBP), glyceraldehyde 3-phosphate (G3P) and ammonia. The ammonia is provided by the PdxT subunit. Can also use ribulose 5-phosphate and dihydroxyacetone phosphate as substrates, resulting from enzyme-catalyzed isomerization of RBP and G3P, respectively. In Methanococcus aeolicus (strain ATCC BAA-1280 / DSM 17508 / OCM 812 / Nankai-3), this protein is Pyridoxal 5'-phosphate synthase subunit PdxS.